Consider the following 157-residue polypeptide: AM-toxin biosynthesis protein 15 (157 aa).

Residues 17–43 (RARHWDSKQGSSNSDVASGGSEVAGNS) are disordered.

It functions in the pathway mycotoxin biosynthesis. Functionally, part of the gene clusters that mediate the biosynthesis of AM-toxins, host-selective toxins (HSTs) causing Alternaria blotch on apple, a worldwide distributed disease. AM-toxins are cyclic depsipeptides containing the 3 residues 2-hydroxy-isovaleric acid (2-HIV), dehydroalanine, L-alanine which are common for all 3 AM-toxins I to III. The fourth precursor is L-alpha-amino-methoxyphenyl-valeric acid (L-Amv) for AM-toxin I, L-alpha-amino-phenyl-valeric acid (L-Apv) for AM-toxin II, and L-alpha-amino-hydroxyphenyl-valeric acid (L-Ahv) for AM-toxin III. AM-toxins have two target sites for affecting susceptible apple cells; they cause invagination of the plasma membrane and electrolyte loss and chloroplast disorganization. The non-ribosomal peptide synthetase AMT1 contains 4 catalytic modules and is responsible for activation of each residue in AM-toxin. The aldo-keto reductase AMT2 catalyzes the conversion of 2-keto-isovaleric acid (2-KIV) to 2-hydroxy-isovaleric acid (2-HIV), one of the precursor residues incorporated by AMT1 during AM-toxin biosynthesis, by reduction of its ketone to an alcohol. The cytochrome P450 monooxygenase AMT3 and the thioesterase AMT4 are also important for AM-toxin production, but their exact function within the AM-toxin biosynthesis are not known yet. Up to 21 proteins (including AMT1 to AMT4) are predicted to be involved in AM-toxin biosynthesis since their expression ishighly up-regulated in AM-toxin-producing cultures. The protein is AM-toxin biosynthesis protein 15 of Alternaria alternata (Alternaria rot fungus).